A 350-amino-acid polypeptide reads, in one-letter code: Small ribosomal subunit biogenesis GTPase RsgA (350 aa).

Over residues 1–17 (MSKNKLSKGQQRRVQAN) the composition is skewed to polar residues. The tract at residues 1 to 35 (MSKNKLSKGQQRRVQANHQRRLRTDRKPELDDSQL) is disordered. The CP-type G domain occupies 103 to 273 (TSVLTRPDLY…VIDSPGVREF (171 aa)). Residues 159–162 (NKID) and 213–221 (GQSGVGKSS) contribute to the GTP site. Cys-297, Cys-302, His-304, and Cys-310 together coordinate Zn(2+).

This sequence belongs to the TRAFAC class YlqF/YawG GTPase family. RsgA subfamily. Monomer. Associates with 30S ribosomal subunit, binds 16S rRNA. Zn(2+) is required as a cofactor.

It is found in the cytoplasm. One of several proteins that assist in the late maturation steps of the functional core of the 30S ribosomal subunit. Helps release RbfA from mature subunits. May play a role in the assembly of ribosomal proteins into the subunit. Circularly permuted GTPase that catalyzes slow GTP hydrolysis, GTPase activity is stimulated by the 30S ribosomal subunit. The polypeptide is Small ribosomal subunit biogenesis GTPase RsgA (Yersinia enterocolitica serotype O:8 / biotype 1B (strain NCTC 13174 / 8081)).